Reading from the N-terminus, the 1210-residue chain is DNA-directed RNA polymerase II subunit RPB2 (1210 aa).

Position 826 (Asp-826) interacts with Mg(2+). 4 residues coordinate Zn(2+): Cys-1152, Cys-1155, Cys-1170, and Cys-1173. The C4-type zinc-finger motif lies at 1152–1173; that stretch reads CDICGLIAIASYKKDSYECRSC.

This sequence belongs to the RNA polymerase beta chain family. In terms of assembly, component of the RNA polymerase II (Pol II) complex consisting of 12 subunits.

It localises to the nucleus. The enzyme catalyses RNA(n) + a ribonucleoside 5'-triphosphate = RNA(n+1) + diphosphate. In terms of biological role, DNA-dependent RNA polymerase catalyzes the transcription of DNA into RNA using the four ribonucleoside triphosphates as substrates. Second largest component of RNA polymerase II which synthesizes mRNA precursors and many functional non-coding RNAs. Proposed to contribute to the polymerase catalytic activity and forms the polymerase active center together with the largest subunit. Pol II is the central component of the basal RNA polymerase II transcription machinery. It is composed of mobile elements that move relative to each other. RPB2 is part of the core element with the central large cleft, the clamp element that moves to open and close the cleft and the jaws that are thought to grab the incoming DNA template. The sequence is that of DNA-directed RNA polymerase II subunit RPB2 (rpb2) from Schizosaccharomyces pombe (strain 972 / ATCC 24843) (Fission yeast).